A 973-amino-acid polypeptide reads, in one-letter code: MTSLSSQPAYTLVFDPSPSMETYSSTDFQKALEKGSDEQKIDTMKSILVTMLEGNPMPELLMHIIRFVMPSKNKELKKLLYFYWEIVPKLAEDGKLRHEMILVCNAIQHDLQHPNEYIRGNTLRFLTKLREAELLEQMVPSVLACLEYRHAYVRKYAILAVFSIFKVSEHLLPDAKEIINSFIVAETDPICKRNAFIGLAELDRENALHYLENNIADIENLDPLLQAVFVQFIRQDANRTPALKAQYIELLMELLSTTTSDEVIFETALALTVLSANPNVLVPAVNKLIDLAVKVSDNNIKLIVLDRIQDINANNVGALEELTLDILRVLNAEDLDVRSKALDISMDLATSRNAEDVVQLLKKELQTTVNNPDQDKAMQYRQLLIKTIRTVAVNFVEMAASVVSLLLDFIGDLNSVAASGIIAFIKEVIEKYPQLRANILENMVQTLDKVRSAKAYRGALWIMGEYAEGESEIQHCWKHIRNSVGEVPILQSEIKKLTQNQEHTEENEVDATAKPTGPVILPDGTYATESAFDVKTSQKSVTDEERDSRPPIRRFVLSGDFYTAAILANTIIKLVLKFENVSKNKTVINALKAEALLILVSIVRVGQSSLVEKKIDEDSLERVMTSISILLDEVNPEEKKEEVKLLEVAFLDTTKSSFKRQIEIAKKNKHKRALKDSCKNIEPIDTPISFRQFAGVDSTNVQKDSIEEDLQLAMKGDAIHATSSSSISKLKKIVPLCGFSDPVYAEACITNNQFDVVLDVLLVNQTKETLKNLHVQFATLGDLKIIDTPQKTNVIPHGFHKFTVTVKVSSADTGVIFGNIIYDGAHGEDARYVILNDVHVDIMDYIKPATADDEHFRTMWNAFEWENKISVKSQLPTLHAYLRELVKGTNMGILTPSESLGEDDCRFLSCNLYAKSSFGEDALANLCIEKDSKTNDVIGYVRIRSKGQGLALSLGDRVALIAKKTNKLALTHV.

HEAT repeat units lie at residues 98 to 133 (HEMI…REAE) and 134 to 170 (LLEQ…VSEH). At serine 181 the chain carries Phosphoserine. 2 HEAT repeats span residues 279–317 (NVLV…NNVG) and 318–354 (ALEE…SRNA). Serine 540 is modified (phosphoserine).

Oligomeric complex that consists of at least the alpha, beta, beta', gamma, delta, epsilon and zeta subunits. The complex interacts with ARF1 and PAB1. In terms of processing, the N-terminus is blocked.

It localises to the cytoplasm. It is found in the golgi apparatus membrane. Its subcellular location is the cytoplasmic vesicle. The protein localises to the COPI-coated vesicle membrane. Its function is as follows. The coatomer is a cytosolic protein complex that binds to dilysine motifs and reversibly associates with Golgi non-clathrin-coated vesicles, which further mediate biosynthetic protein transport from the ER, via the Golgi up to the trans Golgi network. Coatomer complex is required for budding from Golgi membranes, and is essential for the retrograde Golgi-to-ER transport of dilysine-tagged proteins. Required for mitochondrial morphology. The chain is Coatomer subunit beta (SEC26) from Saccharomyces cerevisiae (strain ATCC 204508 / S288c) (Baker's yeast).